Consider the following 113-residue polypeptide: UPF0342 protein MGAS10750_Spy0713 (113 aa).

Belongs to the UPF0342 family.

The polypeptide is UPF0342 protein MGAS10750_Spy0713 (Streptococcus pyogenes serotype M4 (strain MGAS10750)).